The primary structure comprises 285 residues: Polyamine aminopropyltransferase (285 aa).

Residues 5–241 form the PABS domain; that stretch reads DNWYIEHFQP…GWWSVTMASK (237 aa). An S-methyl-5'-thioadenosine-binding site is contributed by Q35. Spermidine-binding residues include H66 and D90. Residues D110 and 141-142 contribute to the S-methyl-5'-thioadenosine site; that span reads DG. D160 functions as the Proton acceptor in the catalytic mechanism. 160 to 163 contacts spermidine; that stretch reads DSTD. P167 provides a ligand contact to S-methyl-5'-thioadenosine.

This sequence belongs to the spermidine/spermine synthase family. In terms of assembly, homodimer or homotetramer.

Its subcellular location is the cytoplasm. The catalysed reaction is S-adenosyl 3-(methylsulfanyl)propylamine + putrescine = S-methyl-5'-thioadenosine + spermidine + H(+). It functions in the pathway amine and polyamine biosynthesis; spermidine biosynthesis; spermidine from putrescine: step 1/1. In terms of biological role, catalyzes the irreversible transfer of a propylamine group from the amino donor S-adenosylmethioninamine (decarboxy-AdoMet) to putrescine (1,4-diaminobutane) to yield spermidine. This Xanthomonas campestris pv. campestris (strain 8004) protein is Polyamine aminopropyltransferase.